The sequence spans 206 residues: 2,3-bisphosphoglycerate-dependent phosphoglycerate mutase (206 aa).

Residues 9–16 (RHGQSEWN), 22–23 (TG), R61, 88–91 (ERDY), K99, 115–116 (RR), and 159–160 (GN) contribute to the substrate site. H10 acts as the Tele-phosphohistidine intermediate in catalysis. E88 (proton donor/acceptor) is an active-site residue.

Belongs to the phosphoglycerate mutase family. BPG-dependent PGAM subfamily. In terms of assembly, homodimer.

It catalyses the reaction (2R)-2-phosphoglycerate = (2R)-3-phosphoglycerate. Its pathway is carbohydrate degradation; glycolysis; pyruvate from D-glyceraldehyde 3-phosphate: step 3/5. Functionally, catalyzes the interconversion of 2-phosphoglycerate and 3-phosphoglycerate. The polypeptide is 2,3-bisphosphoglycerate-dependent phosphoglycerate mutase (Mesorhizobium japonicum (strain LMG 29417 / CECT 9101 / MAFF 303099) (Mesorhizobium loti (strain MAFF 303099))).